Consider the following 295-residue polypeptide: Ethanolamine ammonia-lyase small subunit (295 aa).

Positions 207, 228, and 258 each coordinate adenosylcob(III)alamin.

This sequence belongs to the EutC family. In terms of assembly, the basic unit is a heterodimer which dimerizes to form tetramers. The heterotetramers trimerize; 6 large subunits form a core ring with 6 small subunits projecting outwards. Adenosylcob(III)alamin is required as a cofactor.

The protein resides in the bacterial microcompartment. The enzyme catalyses ethanolamine = acetaldehyde + NH4(+). Its pathway is amine and polyamine degradation; ethanolamine degradation. Functionally, catalyzes the deamination of various vicinal amino-alcohols to oxo compounds. Allows this organism to utilize ethanolamine as the sole source of nitrogen and carbon in the presence of external vitamin B12. This is Ethanolamine ammonia-lyase small subunit from Escherichia coli (strain UTI89 / UPEC).